Here is a 286-residue protein sequence, read N- to C-terminus: 2,3,4,5-tetrahydropyridine-2,6-dicarboxylate N-succinyltransferase (286 aa).

Residues Arg109 and Asp146 each contribute to the substrate site.

This sequence belongs to the transferase hexapeptide repeat family. Homotrimer.

It is found in the cytoplasm. The enzyme catalyses (S)-2,3,4,5-tetrahydrodipicolinate + succinyl-CoA + H2O = (S)-2-succinylamino-6-oxoheptanedioate + CoA. It participates in amino-acid biosynthesis; L-lysine biosynthesis via DAP pathway; LL-2,6-diaminopimelate from (S)-tetrahydrodipicolinate (succinylase route): step 1/3. This chain is 2,3,4,5-tetrahydropyridine-2,6-dicarboxylate N-succinyltransferase, found in Bartonella tribocorum (strain CIP 105476 / IBS 506).